We begin with the raw amino-acid sequence, 384 residues long: Putative pectate lyase 2 (384 aa).

The signal sequence occupies residues 1 to 23 (MASLFLTIISLLFAAFSSSVVEA). Residues aspartate 182, aspartate 206, and aspartate 210 each coordinate Ca(2+). Residue arginine 262 is part of the active site.

Belongs to the polysaccharide lyase 1 family. The cofactor is Ca(2+).

It carries out the reaction Eliminative cleavage of (1-&gt;4)-alpha-D-galacturonan to give oligosaccharides with 4-deoxy-alpha-D-galact-4-enuronosyl groups at their non-reducing ends.. Its pathway is glycan metabolism; pectin degradation; 2-dehydro-3-deoxy-D-gluconate from pectin: step 2/5. The polypeptide is Putative pectate lyase 2 (Arabidopsis thaliana (Mouse-ear cress)).